Reading from the N-terminus, the 108-residue chain is MAEEFVQQRLANNKVTIFVKFTCPFCRNALDILNKFSFKRGAYEIVDIKEFKPENELRDYFEQITGGRTVPRIFFGKTSIGGYSDLLEIDNMDALGDILLSIGVLRTC.

Residues 3–106 (EEFVQQRLAN…DILLSIGVLR (104 aa)) form the Glutaredoxin domain. The cysteines at positions 23 and 26 are disulfide-linked.

The protein belongs to the glutaredoxin family.

The protein localises to the virion. Displays thioltransferase and dehydroascorbate reductase activities. The sequence is that of Glutaredoxin-1 (OPG075) from Cynomys gunnisoni (Gunnison's prairie dog).